The primary structure comprises 204 residues: MTNVAVLSESELGSEAQRERRKRILDATLAIASKGGYEAVQMRAVAERADVAVGTLYRYFPSKVHLLVSALGREFERIDAKTDRAALAGGTPYQRLNFMVGKLNRAMQRNPLLTEAMTRAFVFADASAAGEVDHVGKLMDSMFARAMSDGEPTEDQYHIARVISDVWLSNLLAWLTRRASATDVSKRLDLAVRLLIGTEEQPKI.

The HTH tetR-type domain occupies 18-78 (RERRKRILDA…SALGREFERI (61 aa)). The segment at residues 41–60 (QMRAVAERADVAVGTLYRYF) is a DNA-binding region (H-T-H motif).

As to quaternary structure, homodimer.

Functionally, controls the expression of genes used for utilizing diverse lipids as energy sources. This chain is HTH-type transcriptional repressor KstR (kstR), found in Mycolicibacterium smegmatis (strain ATCC 700084 / mc(2)155) (Mycobacterium smegmatis).